Reading from the N-terminus, the 492-residue chain is Probable Xaa-Pro aminopeptidase AO090005001240 (492 aa).

The Mn(2+) site is built by D272, D283, E420, and E459.

Belongs to the peptidase M24B family. It depends on Mn(2+) as a cofactor.

The catalysed reaction is Release of any N-terminal amino acid, including proline, that is linked to proline, even from a dipeptide or tripeptide.. Catalyzes the removal of a penultimate prolyl residue from the N-termini of peptides. The polypeptide is Probable Xaa-Pro aminopeptidase AO090005001240 (Aspergillus oryzae (strain ATCC 42149 / RIB 40) (Yellow koji mold)).